The chain runs to 676 residues: Envelope fusion protein (676 aa).

Positions 1–16 (MSPLALIVLLAWHATA) are cleaved as a signal peptide. N-linked (GlcNAc...) asparagine; by host glycosylation is found at asparagine 76 and asparagine 87. The stretch at 169–215 (ARELHDLAKTSNALNEQIKEVTDELVNIAKFEEHKQCLERQRDDLCG) forms a coiled coil. N-linked (GlcNAc...) asparagine; by host glycosylation is found at asparagine 266, asparagine 469, asparagine 505, and asparagine 548. The chain crosses the membrane as a helical span at residues 577–597 (CATAEAVVACVVLFLVALLLF). The N-linked (GlcNAc...) asparagine; by host glycan is linked to asparagine 628.

Post-translationally, N-glycosylated.

The protein localises to the virion membrane. Its subcellular location is the host cell membrane. Its function is as follows. Envelope glycoprotein which mediates the fusion of viral and host endosomal membranes leading to virus entry into the host cell. The polypeptide is Envelope fusion protein (Lepidoptera (butterflies and moths)).